The sequence spans 430 residues: Phosphomethylpyrimidine synthase (430 aa).

Residues Asn67, Met96, Tyr125, His161, 183–185 (SRG), 224–227 (DALR), and Glu263 each bind substrate. A Zn(2+)-binding site is contributed by His267. Tyr290 contacts substrate. A Zn(2+)-binding site is contributed by His331. [4Fe-4S] cluster-binding residues include Cys406, Cys409, and Cys413.

Belongs to the ThiC family. As to quaternary structure, homodimer. [4Fe-4S] cluster serves as cofactor.

The catalysed reaction is 5-amino-1-(5-phospho-beta-D-ribosyl)imidazole + S-adenosyl-L-methionine = 4-amino-2-methyl-5-(phosphooxymethyl)pyrimidine + CO + 5'-deoxyadenosine + formate + L-methionine + 3 H(+). It participates in cofactor biosynthesis; thiamine diphosphate biosynthesis. Functionally, catalyzes the synthesis of the hydroxymethylpyrimidine phosphate (HMP-P) moiety of thiamine from aminoimidazole ribotide (AIR) in a radical S-adenosyl-L-methionine (SAM)-dependent reaction. The sequence is that of Phosphomethylpyrimidine synthase from Campylobacter jejuni subsp. doylei (strain ATCC BAA-1458 / RM4099 / 269.97).